Reading from the N-terminus, the 575-residue chain is MATIPRRAYAEMFGPTIGDRLRLADTELILEVEDDLTLRAGGYGEEVKFGGGKTIRDGMGQGQRVNGPGAADAVDCVITNALIVDHWGIVKADIGLRGNRIAAIGKAGNPDIQPGVDIVIGPGTEVIAAEGLIVTAGGIDSHIHWICPQQIDEALASGVTTMLGGGTGPATGTFATTCTPGPENIARMLQAADAFPMNLGFFGKGNASRPEALRQQVDAGAIALKLHEDWGTTPAAIDCCLSVAEQTDIQVAIHTDTLNESGFVEDTVAAFKGRTIHTFHTEGAGGGHAPDIMKVVGEANVLPSSTNPTRPYTVNTLDEHLDMLMVCHHLDAGIAEDLAFAESRIRRETIAAEDILHDLGAISMMSSDSQAMGRVGEVVIRTWQTAHKMKVQRGKLPGDTDRHDNARIKRYIAKYTINPALAHGMSHEVGSIEVGKWADLVFWKPAFFGVKPSLVLKGGFIALAAMGDPNASIPTPQPVHYRPMFGSFGGALARTSLTFLSQAALADDVGTRYGLHKRLAAVRGIRSVKKADMIHNGATPVMEIDAQTYSVRADGQLLTCEPAQVLPMAQRYFLF.

Residues 137–575 (GGIDSHIHWI…LPMAQRYFLF (439 aa)) form the Urease domain. Ni(2+) contacts are provided by histidine 142, histidine 144, and lysine 225. Lysine 225 is modified (N6-carboxylysine). Residue histidine 227 participates in substrate binding. Histidine 254 and histidine 280 together coordinate Ni(2+). Residue histidine 328 is the Proton donor of the active site. Aspartate 368 provides a ligand contact to Ni(2+).

It belongs to the metallo-dependent hydrolases superfamily. Urease alpha subunit family. In terms of assembly, heterotrimer of UreA (gamma), UreB (beta) and UreC (alpha) subunits. Three heterotrimers associate to form the active enzyme. It depends on Ni cation as a cofactor. In terms of processing, carboxylation allows a single lysine to coordinate two nickel ions.

It is found in the cytoplasm. It carries out the reaction urea + 2 H2O + H(+) = hydrogencarbonate + 2 NH4(+). It functions in the pathway nitrogen metabolism; urea degradation; CO(2) and NH(3) from urea (urease route): step 1/1. This Leptothrix cholodnii (strain ATCC 51168 / LMG 8142 / SP-6) (Leptothrix discophora (strain SP-6)) protein is Urease subunit alpha.